The chain runs to 131 residues: Small ribosomal subunit protein uS8 (131 aa).

The protein belongs to the universal ribosomal protein uS8 family. In terms of assembly, part of the 30S ribosomal subunit. Contacts proteins S5 and S12.

In terms of biological role, one of the primary rRNA binding proteins, it binds directly to 16S rRNA central domain where it helps coordinate assembly of the platform of the 30S subunit. This is Small ribosomal subunit protein uS8 from Nautilia profundicola (strain ATCC BAA-1463 / DSM 18972 / AmH).